Consider the following 397-residue polypeptide: Elongation factor Tu 1 (397 aa).

Positions 10–206 (KPHVNIGTIG…AVDENIPQPE (197 aa)) constitute a tr-type G domain. The segment at 19–26 (GHIDHGKT) is G1. 19-26 (GHIDHGKT) contacts GTP. Threonine 26 is a binding site for Mg(2+). The interval 62 to 66 (GITIS) is G2. The interval 83–86 (DCPG) is G3. Residues 83 to 87 (DCPGH) and 138 to 141 (NKAD) contribute to the GTP site. The tract at residues 138–141 (NKAD) is G4. The tract at residues 176–178 (SAL) is G5.

Belongs to the TRAFAC class translation factor GTPase superfamily. Classic translation factor GTPase family. EF-Tu/EF-1A subfamily. In terms of assembly, monomer.

It localises to the cytoplasm. The enzyme catalyses GTP + H2O = GDP + phosphate + H(+). GTP hydrolase that promotes the GTP-dependent binding of aminoacyl-tRNA to the A-site of ribosomes during protein biosynthesis. In Streptomyces avermitilis (strain ATCC 31267 / DSM 46492 / JCM 5070 / NBRC 14893 / NCIMB 12804 / NRRL 8165 / MA-4680), this protein is Elongation factor Tu 1.